A 150-amino-acid chain; its full sequence is UPF0735 ACT domain-containing protein Csac_0995 (150 aa).

One can recognise an ACT domain in the interval 72–147 (TLALVLQDVP…GVKKIEILGR (76 aa)).

Belongs to the UPF0735 family.

This chain is UPF0735 ACT domain-containing protein Csac_0995, found in Caldicellulosiruptor saccharolyticus (strain ATCC 43494 / DSM 8903 / Tp8T 6331).